A 288-amino-acid polypeptide reads, in one-letter code: Mortality factor 4-like protein 2 (288 aa).

Residues 1–15 (MSSRKQGSQPRGQQS) show a composition bias toward polar residues. The tract at residues 1–113 (MSSRKQGSQP…RADPTVESEE (113 aa)) is disordered. Serine 71 is modified (phosphoserine). The region spanning 117-288 (NRMEVKVKIP…ASAEYHRKAL (172 aa)) is the MRG domain.

In terms of assembly, component of the NuA4 histone acetyltransferase complex which contains the catalytic subunit KAT5/TIP60 and the subunits EP400, TRRAP/PAF400, BRD8/SMAP, EPC1, DMAP1/DNMAP1, RUVBL1/TIP49, RUVBL2, ING3, actin, ACTL6A/BAF53A, MORF4L1/MRG15, MORF4L2/MRGX, MRGBP, YEATS4/GAS41 and VPS72/YL1. The NuA4 complex interacts with MYC and the adenovirus E1A protein. MORF4L1 may also participate in the formation of NuA4 related complexes which lack the KAT5/TIP60 catalytic subunit, but which include the SWI/SNF related protein SRCAP. Component of the MSIN3A histone deacetylase complex, which includes SIN3A, HDAC2, ARID4B, MORF4L1, RBBP4/RbAp48, and RBBP7/RbAp46. Interacts with MRFAP1 and RB1. May also interact with one or more as yet undefined members of the TLE (transducin-like enhancer of split) family of transcriptional repressors.

It is found in the nucleus. In terms of biological role, component of the NuA4 histone acetyltransferase complex which is involved in transcriptional activation of select genes principally by acetylation of nucleosomal histone H4 and H2A. This modification may both alter nucleosome - DNA interactions and promote interaction of the modified histones with other proteins which positively regulate transcription. This complex may be required for the activation of transcriptional programs associated with oncogene and proto-oncogene mediated growth induction, tumor suppressor mediated growth arrest and replicative senescence, apoptosis, and DNA repair. The NuA4 complex ATPase and helicase activities seem to be, at least in part, contributed by the association of RUVBL1 and RUVBL2 with EP400. NuA4 may also play a direct role in DNA repair when directly recruited to sites of DNA damage. Also a component of the MSIN3A complex which acts to repress transcription by deacetylation of nucleosomal histones. The sequence is that of Mortality factor 4-like protein 2 (MORF4L2) from Macaca fascicularis (Crab-eating macaque).